A 510-amino-acid chain; its full sequence is Bifunctional purine biosynthesis protein PurH (510 aa).

One can recognise an MGS-like domain in the interval 1-143 (MTKRALISVS…KNHSGVLVLV (143 aa)).

Belongs to the PurH family.

The catalysed reaction is (6R)-10-formyltetrahydrofolate + 5-amino-1-(5-phospho-beta-D-ribosyl)imidazole-4-carboxamide = 5-formamido-1-(5-phospho-D-ribosyl)imidazole-4-carboxamide + (6S)-5,6,7,8-tetrahydrofolate. It carries out the reaction IMP + H2O = 5-formamido-1-(5-phospho-D-ribosyl)imidazole-4-carboxamide. The protein operates within purine metabolism; IMP biosynthesis via de novo pathway; 5-formamido-1-(5-phospho-D-ribosyl)imidazole-4-carboxamide from 5-amino-1-(5-phospho-D-ribosyl)imidazole-4-carboxamide (10-formyl THF route): step 1/1. Its pathway is purine metabolism; IMP biosynthesis via de novo pathway; IMP from 5-formamido-1-(5-phospho-D-ribosyl)imidazole-4-carboxamide: step 1/1. In Deinococcus deserti (strain DSM 17065 / CIP 109153 / LMG 22923 / VCD115), this protein is Bifunctional purine biosynthesis protein PurH.